Reading from the N-terminus, the 104-residue chain is Protein EPIDERMAL PATTERNING FACTOR 1 (104 aa).

A signal peptide spans 1–20 (MKSLLLLAFFLSFFFGSLLA). Intrachain disulfides connect C60–C94, C64–C70, C67–C96, and C79–C88. Residue N98 is glycosylated (N-linked (GlcNAc...) asparagine).

The protein belongs to the plant cysteine rich small secretory peptide family. Epidermal patterning factor subfamily. In terms of assembly, interacts with ERECTA and ERL1, but not with TMM. Expressed in shoots, but not in roots. Mostly localized in developing leaves, specifically in meristemoids, guard mother cells (GMCs), and young guard cells.

It localises to the secreted. Controls stomatal patterning. Regulates asymmetric cell division during guard cell differentiation. Mediates stomatal development inhibition. Not cleaved by the protease CRSP (AC Q9LNU1). MEPF1: mobile signal controlling stomatal development in a non-cell-autonomous manner. Uses ERL1 as major receptor. May act by competing with somatogen (AC Q9SV72) for the same receptor, TMM (AC Q9SSD1). This chain is Protein EPIDERMAL PATTERNING FACTOR 1, found in Arabidopsis thaliana (Mouse-ear cress).